The sequence spans 77 residues: Tautomerase PptA (77 aa).

The active-site Proton acceptor; via imino nitrogen is P2.

It belongs to the 4-oxalocrotonate tautomerase family. PptA subfamily. As to quaternary structure, homodimer.

It localises to the cytoplasm. This is Tautomerase PptA from Escherichia coli (strain K12 / MC4100 / BW2952).